Reading from the N-terminus, the 1285-residue chain is Transmembrane channel-like protein 1 (1285 aa).

The interval 1–29 is disordered; sequence MQEAARRASLRKEHTPTNEKFGDLSKQDS. Residues 1-164 lie on the Cytoplasmic side of the membrane; the sequence is MQEAARRASL…KIKRIESHFG (164 aa). A helical membrane pass occupies residues 165 to 202; the sequence is SVVSSYFTFLRWIVFVNIMITLIALVFVVLPETLADSV. The Extracellular portion of the chain corresponds to 203-260; the sequence is ANEGRFNRTKTRKQIPANERVHADELAVVWHYDGYLRYSPLFYGYYSDDPFLGNKIKY. An N-linked (GalNAc...) asparagine glycan is attached at N209. Residues 261–292 traverse the membrane as a helical segment; that stretch reads ALPLAYFMVTLTIFAYSFFAILRKMAANARMS. Residues 293–349 are Cytoplasmic-facing; sequence KLSGSKAEQYIFNWKLFTGWDYTIGNSETASNTVMAVVIKLRESIADIKKDAHGKFR. A helical membrane pass occupies residues 350 to 381; the sequence is LLQFSLRVFANIIICAMLGFSIYCIIFAVQKS. Residues 382 to 388 lie on the Extracellular side of the membrane; it reads QVQDDGN. Residues 389 to 416 form a helical membrane-spanning segment; it reads LFTKNQVPSVVSTITHVFPMIFDLIGKM. The Cytoplasmic segment spans residues 417-420; the sequence is ENYH. A helical transmembrane segment spans residues 421–455; that stretch reads PRTALRAHLGRVLILYTVNYITLIFALFEKMTALR. Topologically, residues 456-667 are extracellular; sequence DRVNSTSTSS…NHDGHNNDIC (212 aa). A disordered region spans residues 458–488; it reads VNSTSTSSSHRTKRQQGGWNPNMQRPPPYAS. A disulfide bridge links C667 with C816. A helical transmembrane segment spans residues 668–705; it reads WETIIGQEIVKLVTMDLIFTILSILVIDLFRGLWIKYC. The interval 696–720 is required for interaction with tmie; that stretch reads LFRGLWIKYCSSWWCWDIETTFPEY. Residues 706-724 lie on the Cytoplasmic side of the membrane; it reads SSWWCWDIETTFPEYGEFK. A helical membrane pass occupies residues 725–745; that stretch reads VAENVLHIINNQGMIWLGLFF. Topologically, residues 746 to 748 are extracellular; the sequence is APL. Residues 749 to 771 form a helical membrane-spanning segment; sequence LPAINNIKLIILMYIRGWAVMTC. Residues 766–773 form a required for interaction with tmie region; that stretch reads WAVMTCNV. The Cytoplasmic segment spans residues 772-785; it reads NVPAREIFRASRSS. A helical transmembrane segment spans residues 786-809; it reads NFYLGILLIWLLLCTLPVGFVIAS. Residues 810–852 lie on the Extracellular side of the membrane; that stretch reads MSPSRSCGPFARYQHFYTVVTREIEKRVDQTVLSYIRHIASPG. The chain crosses the membrane as a helical span at residues 853-886; it reads VVIPIILFLILIIYFLFSLVRGLREANTDLQAQL. The Cytoplasmic portion of the chain corresponds to 887–1285; that stretch reads VHERTEEKKK…DEDDSPRQID (399 aa). Disordered regions lie at residues 940–962 and 1114–1285; these read ADHA…DDER and TIKE…RQID. Positions 948–961 are enriched in acidic residues; that stretch reads SSEESDINEDEDDE. 3 stretches are compositionally biased toward basic and acidic residues: residues 1121 to 1131, 1146 to 1156, and 1167 to 1182; these read DPGKSDKKQTS, DEARALREKMK, and TVEE…ESEF. The segment covering 1197-1208 has biased composition (acidic residues); that stretch reads TEEENEEEETDS.

It belongs to the TMC family. In terms of assembly, homodimer. Interacts with calm-1 and tmie to form the MET channel. Expressed in the ASH polymodal avoidance neurons. Also expressed in other sensory neurons, including the ADF, ASE, ADL, AQR, PQR, URX and PHA cells.

The protein localises to the cell membrane. The enzyme catalyses Na(+)(in) = Na(+)(out). It catalyses the reaction Ca(2+)(in) = Ca(2+)(out). It carries out the reaction K(+)(in) = K(+)(out). Pore-forming subunit of the mechanotransducer (MET) non-selective cation channel complex. The MET complex is composed of symmetric dimeric MET channels, each channel comprising two copies of pore-forming ion-conducting transmembrane TMC subunits and auxiliary proteins including the transmembrane inner ear protein/tmie, the calcium-binding protein/calm-1 and arrestin domain protein arrd-6. Sodium ions are the most permeable, whereas calcium and potassium have lower indices. Sodium-sensor ion channel that acts specifically in salt taste chemosensation. Required for salt-evoked neuronal activity and behavioral avoidance of high concentrations of NaCl. The sequence is that of Transmembrane channel-like protein 1 (tmc-1) from Caenorhabditis elegans.